Reading from the N-terminus, the 2919-residue chain is MTTPPLVIPLHVHGRSYELLAGYHEVDWQEIEELEETDVRGDGFCLYHSILYSMGLSKENSRTTEFMIKLRSNPAICQLDQEMQLSLMKQLDPNDSSAWGEDIAIGFIAIILRIKIIAYQTVDGKLFKTIYGAEFESTIRIRNYGNYHFKSLETDFDHKVKLRSKIEEFLRMPVEDCESISLWHASVYKPIVSDSLSGHKSFSNVDELIGSIISSMYKIMDNGDQCFLWSAMRMVARPSEKLYALAVFLGFNLKFYHVRKRAEKLTAKLESDHTNLGVKLIEVYEVSEPTRSTWVLKPGGSRITETRNFVIEEIIDNRRSLESLFVSSSEYPAELCSQKLSAIKDRIALMFGFINRTPENSGRELYINTYYLKRILQVERNVIRDSLRSQPAVGMIQIIRLPTAFGTYNPEVGTLLLAQTGLIYRLGTTTRVQMEVRRSPSVISRSHKITSFPETQKHNNNLYDYAPRTQETFYHPNAEIYEAVDVKTPSVITEIVDNHIVIKLNTDDKGWSVSDSIKQDFVYRKRLMDAKNIVHDFVFDILSTETDKSFKGADLSIGGISDNWSPDVIISRESDPQYEDIVVYEFTTRSTESIESLLRSVEVKSLRYKEAIQERAITLKKRISYYTICVSLDAVATNLLSLPADVCRELIIRLRVANQVKIQLADNDINLDSATLLAPDIYRIKEMFRESFPNNKFIHPITKEMYEHFVNPMISGEKDYVANLKSIIDKETRDEQRKNLESLKVVDGKKYTERKAETALNEMSQAEEHYRSYFENDNFRSTLKAPVQLPLIIPDVSSQDNQFSNKELSDRIRKKPIDHPIYNIWDQAVNKRNCSIALGHLDELEISMLEGQVAKKVEESYKKDRSQYNRTTLLTNMKEDIYLAERGINAKKRLEEPDVKFYRDQSKRPFHPFVSETRDIEQFTQKECLELNEESGHCSLINVEDLVLSALELHEVGDLEHLWNNIKAHSKTKFALYAKFISDLATELAISLSQNCKEDTYVVKKLRDFSCYVLIKPVNLKSNVFFSLYIPSNIYKSHNTTFKTLIGSPESGYMTDFVSANVSKLVNWVRCEAMMLAQRGFWREFYAVAPSIEEQDGMAEPDSVCQMMSWTLLILLNDKHQLEEMITVSRFVHMEGFVTFPAWPKPYKMFDKLSVTPRSRLECLVIKRLIMLMKHYSENPIKFMIEDEKKKWFGFKNMFLLDCNGKLADLSDQDQMLNLFYLGYLKNKDEEVEDNGMGQLLTKILGFESAMPKTRDFLGMKDPEYGTIKKHEFSISYVKDLCDKFLDRLKKTHGIKDPITYLGDKIAKFLSTQFIETMASLKASSNFSEDYYLYTPSRRLKNQEQSRSKHVIDAGGNISASVKGKLYHRSKVIEKLTTLIKDETPGKELKIVVDLLPKAMEVLNKNECMHICIFKKNQHGGLREIYVLNIFERIMQKTVEDFSRAILECCPSETMTSPKNKFRIPELHNMEARKTLKNEYMTISTSDDASKWNQGHYVSKFMCMLLRLTPTYYHGFLVQALQLWHHKKIFLGDQLLQLFNQNAMLNTMDTTLMKVFQAYKGEIQVPWMKAGRSYIETETGMMQGILHYTSSLFHAIFLDQLAEECRRDINRAIKTINNKENEKVSCIVNNMESSDDSSFIISIPNFKENEAAQLYLLCVVNSWFRKKEKLGTYLGIYKSPKSTTQTLFVMEFNSEFFFSGDVHRPTFRWVNAAVLIGEQETLSGIQEELSNTLKDVIEGGGTYALTFIVQVAQAMIHYRMLGSSASSVWPAYETLLKNSYDPALGFFLMDNPKCAGLLGFNYNVWIACTTTPLGEKYHEMIQEEMKAESQSLKSVTEDTINTGLVSRTTMVGFGNKKRWMKLMTTLNLSADVYEKIEEEPRVYFFHAATAEQIIQKIAIKMKSPGVIQSLSKGNMLARKIASSVFFISRHIVFTMSAYYDADPETRKTSLLKELINSSKIPQRHDYLQEPHTLKPTKVEVDEDSWEFKSAKEECVRVLKQRIKIHTGREERSISLLFENMAKSMIGRCTDQYDVRENVSILACALKMNYSIFKKDAAPNRYLLDEKNLVYPLIGKEVSVYVKSDKVHIEISEKKERLSTKLFNIDKMKDIEETLSLLFPSYGDYLSLKETIDQVTFQSAIHKVNERRRVRADVHLTGTEGFSKLPMYTAAVWAWFDVKTIPAHDSIYRTIWKVYKEQYSWLSDTLKETVEKGPFKTVQGVVNFISRAGVRSRVVHLVGSFGKNVRGSINLVTAIKDNFSNGLVFKGNIFDIKAKKTRESLDNYLSICTTLSQAPITKHDKNQILRSLFVSGPRIQYVSSQFGSRRNRMSILQEVVADDPTLHWPDQDTSQKQLEDKFRELAHKELPFLTEKVFHDYLEKIEQLMKENTHLGGRDVDASKTPYVLARANDIEIHCYELWREYDEDEDEAYQAYCSEVEAAMDQEKLNALIERYHVDPKANWIQMLMNGEIETVEELNKLDKGFESHRLALVERIRVGKLGILGSYTKCQQRIEELDGEGNKTHRYTGEGIWRGSFDDSDVCIVVQDLKKTRESYLKCVVFSKVSDYKVLMGHLKTWCREHHISNDEFPTCTQKELLSYGVTKSSVLLYKMNGMKMLRNMEKGIPLYWNPSLSTRSQTYINWLAVDITDHSLRLRNRTVENGRVVNQTIMVVPLYKTDVQIFKTSPVDLEQDVQNDRLKLLSVTKAGELRWLQDWIMWRSSAVDDLNILNQVRRNKAARDHFNAKPEFKKWIKELWDYALDTTLINKKVFITTQGSESQSTVSSGDSDSAVAPLTDEAVDEIHDLLDKELEKGTLKQIIHDATIDAQLDIPAIESFLAEEMEVFKSSLAKSHPLLLNYVRYMIQEIGVTNFRSLIDSFNQKDPLKSVSLSILDLKEVFKFVYQDINDAYFVKQEEDHKFDF.

The endonuclease stretch occupies residues 86-675; the sequence is SLMKQLDPND…DNDINLDSAT (590 aa). Positions 535, 567, and 585 each coordinate Mn(2+). Lys604 serves as the catalytic For endonuclease activity. The region spanning 1472 to 1671 is the RdRp catalytic domain; sequence ARKTLKNEYM…SWFRKKEKLG (200 aa). Asp1636 is a Mg(2+) binding site. Residues 2494-2632 are cap-binding; that stretch reads RVGKLGILGS…PLYWNPSLST (139 aa).

It belongs to the Bunyavirales RNA polymerase family. As to quaternary structure, homomultimer. Interacts with glycoprotein N; this interaction allows efficient polymerase packaging into virus particles. Interacts with nucleoprotein N. Mn(2+) serves as cofactor. Requires Mg(2+) as cofactor.

Its subcellular location is the host Golgi apparatus. It is found in the host endoplasmic reticulum. It localises to the host endoplasmic reticulum-Golgi intermediate compartment. The protein resides in the virion. The catalysed reaction is RNA(n) + a ribonucleoside 5'-triphosphate = RNA(n+1) + diphosphate. Functionally, RNA-dependent RNA polymerase, which is responsible for the replication and transcription of the viral RNA genome using antigenomic RNA as an intermediate. During transcription, synthesizes subgenomic RNAs and assures their capping by a cap-snatching mechanism, which involves the endonuclease activity cleaving the host capped pre-mRNAs. These short capped RNAs are then used as primers for viral transcription. The 3'-end of subgenomic mRNAs molecules are not polyadenylated. During replication, the polymerase binds the 5' and 3' vRNA extremities at distinct sites. In turn, significant conformational changes occur in the polymerase and in vRNA to initiate active RNA synthesis. As a consequence of the use of the same enzyme for both transcription and replication, these mechanisms need to be well coordinated. The polypeptide is RNA-directed RNA polymerase L (Avena sativa (Oat)).